The sequence spans 622 residues: Membrane protein insertase YidC (622 aa).

Residues 6 to 26 (FIAVVLSVLVLVGASFLQELL) traverse the membrane as a helical segment. The segment at 37–71 (AEHTLSAVPEETRTQSAHGGAADTQETTQPAAHPS) is disordered. The next 4 membrane-spanning stretches (helical) occupy residues 413 to 433 (LIPN…VLFF), 483 to 503 (LSGC…YRLF), 513 to 533 (MFIP…TLPF), and 579 to 599 (VMPL…LVYW).

This sequence belongs to the OXA1/ALB3/YidC family. Type 1 subfamily. Interacts with the Sec translocase complex via SecD. Specifically interacts with transmembrane segments of nascent integral membrane proteins during membrane integration.

It is found in the cell inner membrane. Functionally, required for the insertion and/or proper folding and/or complex formation of integral membrane proteins into the membrane. Involved in integration of membrane proteins that insert both dependently and independently of the Sec translocase complex, as well as at least some lipoproteins. Aids folding of multispanning membrane proteins. The sequence is that of Membrane protein insertase YidC from Treponema pallidum (strain Nichols).